The primary structure comprises 167 residues: Leptin (167 aa).

Residues 1–21 (MCWRPLCRFLWLWSYLSYVQA) form the signal peptide. C117 and C167 are joined by a disulfide.

The protein belongs to the leptin family.

Its subcellular location is the secreted. Functionally, key player in the regulation of energy balance and body weight control. Once released into the circulation, has central and peripheral effects by binding LEPR, found in many tissues, which results in the activation of several major signaling pathways. In the hypothalamus, acts as an appetite-regulating factor that induces a decrease in food intake and an increase in energy consumption by inducing anorexinogenic factors and suppressing orexigenic neuropeptides, also regulates bone mass and secretion of hypothalamo-pituitary-adrenal hormones. In the periphery, increases basal metabolism, influences reproductive function, regulates pancreatic beta-cell function and insulin secretion, is pro-angiogenic for endothelial cell and affects innate and adaptive immunity. In the arcuate nucleus of the hypothalamus, activates by depolarization POMC neurons inducing FOS and SOCS3 expression to release anorexigenic peptides and inhibits by hyperpolarization NPY neurons inducing SOCS3 with a consequent reduction on release of orexigenic peptides. In addition to its known satiety inducing effect, has a modulatory role in nutrient absorption. In the intestine, reduces glucose absorption by enterocytes by activating PKC and leading to a sequential activation of p38, PI3K and ERK signaling pathways which exerts an inhibitory effect on glucose absorption. Acts as a growth factor on certain tissues, through the activation of different signaling pathways increases expression of genes involved in cell cycle regulation such as CCND1, via JAK2-STAT3 pathway, or VEGFA, via MAPK1/3 and PI3K-AKT1 pathways. May also play an apoptotic role via JAK2-STAT3 pathway and up-regulation of BIRC5 expression. Pro-angiogenic, has mitogenic activity on vascular endothelial cells and plays a role in matrix remodeling by regulating the expression of matrix metalloproteinases (MMPs) and tissue inhibitors of metalloproteinases (TIMPs). In innate immunity, modulates the activity and function of neutrophils by increasing chemotaxis and the secretion of oxygen radicals. Increases phagocytosis by macrophages and enhances secretion of pro-inflammatory mediators. Increases cytotoxic ability of NK cells. Plays a pro-inflammatory role, in synergy with IL1B, by inducing NOS2 which promotes the production of IL6, IL8 and Prostaglandin E2, through a signaling pathway that involves JAK2, PI3K, MAP2K1/MEK1 and MAPK14/p38. In adaptive immunity, promotes the switch of memory T-cells towards T helper-1 cell immune responses. Increases CD4(+)CD25(-) T cells proliferation and reduces autophagy during TCR (T cell receptor) stimulation, through MTOR signaling pathway activation and BCL2 up-regulation. In Mus musculus (Mouse), this protein is Leptin (Lep).